A 149-amino-acid polypeptide reads, in one-letter code: UPF0179 protein Hlac_2319 (149 aa).

This sequence belongs to the UPF0179 family.

The sequence is that of UPF0179 protein Hlac_2319 from Halorubrum lacusprofundi (strain ATCC 49239 / DSM 5036 / JCM 8891 / ACAM 34).